A 228-amino-acid polypeptide reads, in one-letter code: Probable septum site-determining protein MinC (228 aa).

The protein belongs to the MinC family. In terms of assembly, interacts with MinD and FtsZ.

Functionally, cell division inhibitor that blocks the formation of polar Z ring septums. Rapidly oscillates between the poles of the cell to destabilize FtsZ filaments that have formed before they mature into polar Z rings. Prevents FtsZ polymerization. The chain is Probable septum site-determining protein MinC from Bacillus cereus (strain G9842).